Consider the following 360-residue polypeptide: Phosphoserine aminotransferase (360 aa).

Residue Arg-42 coordinates L-glutamate. Residues Ala-76–Ser-77, Trp-102, Thr-152, Asp-172, and Gln-195 contribute to the pyridoxal 5'-phosphate site. Lys-196 is modified (N6-(pyridoxal phosphate)lysine). Pyridoxal 5'-phosphate is bound at residue Asn-237 to Thr-238.

It belongs to the class-V pyridoxal-phosphate-dependent aminotransferase family. SerC subfamily. In terms of assembly, homodimer. Pyridoxal 5'-phosphate is required as a cofactor.

It localises to the cytoplasm. The enzyme catalyses O-phospho-L-serine + 2-oxoglutarate = 3-phosphooxypyruvate + L-glutamate. The catalysed reaction is 4-(phosphooxy)-L-threonine + 2-oxoglutarate = (R)-3-hydroxy-2-oxo-4-phosphooxybutanoate + L-glutamate. It functions in the pathway amino-acid biosynthesis; L-serine biosynthesis; L-serine from 3-phospho-D-glycerate: step 2/3. In terms of biological role, catalyzes the reversible conversion of 3-phosphohydroxypyruvate to phosphoserine and of 3-hydroxy-2-oxo-4-phosphonooxybutanoate to phosphohydroxythreonine. The chain is Phosphoserine aminotransferase from Bacillus cereus (strain ATCC 14579 / DSM 31 / CCUG 7414 / JCM 2152 / NBRC 15305 / NCIMB 9373 / NCTC 2599 / NRRL B-3711).